Here is a 356-residue protein sequence, read N- to C-terminus: UDP-N-acetylglucosamine--N-acetylmuramyl-(pentapeptide) pyrophosphoryl-undecaprenol N-acetylglucosamine transferase (356 aa).

UDP-N-acetyl-alpha-D-glucosamine contacts are provided by residues 12-14 (TGG), asparagine 124, arginine 163, serine 188, isoleucine 242, and glutamine 287.

It belongs to the glycosyltransferase 28 family. MurG subfamily.

The protein resides in the cell inner membrane. The enzyme catalyses di-trans,octa-cis-undecaprenyl diphospho-N-acetyl-alpha-D-muramoyl-L-alanyl-D-glutamyl-meso-2,6-diaminopimeloyl-D-alanyl-D-alanine + UDP-N-acetyl-alpha-D-glucosamine = di-trans,octa-cis-undecaprenyl diphospho-[N-acetyl-alpha-D-glucosaminyl-(1-&gt;4)]-N-acetyl-alpha-D-muramoyl-L-alanyl-D-glutamyl-meso-2,6-diaminopimeloyl-D-alanyl-D-alanine + UDP + H(+). Its pathway is cell wall biogenesis; peptidoglycan biosynthesis. Its function is as follows. Cell wall formation. Catalyzes the transfer of a GlcNAc subunit on undecaprenyl-pyrophosphoryl-MurNAc-pentapeptide (lipid intermediate I) to form undecaprenyl-pyrophosphoryl-MurNAc-(pentapeptide)GlcNAc (lipid intermediate II). This chain is UDP-N-acetylglucosamine--N-acetylmuramyl-(pentapeptide) pyrophosphoryl-undecaprenol N-acetylglucosamine transferase, found in Pseudomonas fluorescens (strain Pf0-1).